Here is a 489-residue protein sequence, read N- to C-terminus: Rhamnulokinase (489 aa).

13–17 (ASSGR) provides a ligand contact to ATP. A disulfide bond links Cys68 and Cys222. Substrate-binding positions include Gly83 and 236–238 (HDT). The Proton acceptor role is filled by Asp237. Thr259 provides a ligand contact to ATP. Asn296 serves as a coordination point for substrate. Gln304 contacts ATP. The cysteines at positions 353 and 370 are disulfide-linked. Gly402 provides a ligand contact to ATP. Cys413 and Cys417 form a disulfide bridge.

Belongs to the rhamnulokinase family. In terms of assembly, monomer. Requires Mg(2+) as cofactor.

It catalyses the reaction L-rhamnulose + ATP = L-rhamnulose 1-phosphate + ADP + H(+). It functions in the pathway carbohydrate degradation; L-rhamnose degradation; glycerone phosphate from L-rhamnose: step 2/3. Functionally, involved in the catabolism of L-rhamnose (6-deoxy-L-mannose). Catalyzes the transfer of the gamma-phosphate group from ATP to the 1-hydroxyl group of L-rhamnulose to yield L-rhamnulose 1-phosphate. The chain is Rhamnulokinase from Escherichia coli (strain SE11).